Reading from the N-terminus, the 127-residue chain is Large ribosomal subunit protein uL18 (127 aa).

Belongs to the universal ribosomal protein uL18 family. Part of the 50S ribosomal subunit; part of the 5S rRNA/L5/L18/L25 subcomplex. Contacts the 5S and 23S rRNAs.

This is one of the proteins that bind and probably mediate the attachment of the 5S RNA into the large ribosomal subunit, where it forms part of the central protuberance. The chain is Large ribosomal subunit protein uL18 from Streptomyces griseus subsp. griseus (strain JCM 4626 / CBS 651.72 / NBRC 13350 / KCC S-0626 / ISP 5235).